We begin with the raw amino-acid sequence, 187 residues long: uncharacterized protein (187 aa).

An N-terminal signal peptide occupies residues 1–17; sequence MYAGGRVVRSAFARGKV. A lipid anchor (N-palmitoyl cysteine) is attached at cysteine 18. Cysteine 18 carries S-diacylglycerol cysteine lipidation.

It localises to the cell membrane. This is an uncharacterized protein from Treponema pallidum (strain Nichols).